Reading from the N-terminus, the 195-residue chain is CDP-diacylglycerol--glycerol-3-phosphate 3-phosphatidyltransferase (195 aa).

4 consecutive transmembrane segments (helical) span residues 7–24 (ITVL…LFYL), 60–81 (FGAF…VLLV), 134–150 (MLAL…FTFW), and 157–173 (FLLI…LQYL).

The protein belongs to the CDP-alcohol phosphatidyltransferase class-I family.

The protein localises to the cell membrane. It carries out the reaction a CDP-1,2-diacyl-sn-glycerol + sn-glycerol 3-phosphate = a 1,2-diacyl-sn-glycero-3-phospho-(1'-sn-glycero-3'-phosphate) + CMP + H(+). Its pathway is phospholipid metabolism; phosphatidylglycerol biosynthesis; phosphatidylglycerol from CDP-diacylglycerol: step 1/2. Functionally, this protein catalyzes the committed step to the synthesis of the acidic phospholipids. This Pseudomonas fluorescens protein is CDP-diacylglycerol--glycerol-3-phosphate 3-phosphatidyltransferase (pgsA).